A 110-amino-acid polypeptide reads, in one-letter code: MEQFEHISVDQAYSLLQQEDSLAVLVDIRDPQSFGLAHPENAYHLTNDTMVELMNQVDFEQPVIVMCYHGISSQGAAQYLINQGFEAVYSLDGGFEAWRRQALPIIQQIG.

The region spanning 19 to 107 (EDSLAVLVDI…WRRQALPIIQ (89 aa)) is the Rhodanese domain. The active-site Cysteine persulfide intermediate is the Cys-67.

It belongs to the GlpE family.

The protein localises to the cytoplasm. The catalysed reaction is thiosulfate + hydrogen cyanide = thiocyanate + sulfite + 2 H(+). It carries out the reaction thiosulfate + [thioredoxin]-dithiol = [thioredoxin]-disulfide + hydrogen sulfide + sulfite + 2 H(+). Its function is as follows. Transferase that catalyzes the transfer of sulfur from thiosulfate to thiophilic acceptors such as cyanide or dithiols. May function in a CysM-independent thiosulfate assimilation pathway by catalyzing the conversion of thiosulfate to sulfite, which can then be used for L-cysteine biosynthesis. This is Thiosulfate sulfurtransferase GlpE from Photobacterium profundum (strain SS9).